Reading from the N-terminus, the 87-residue chain is CRISPR-associated endoribonuclease Cas2 (87 aa).

Aspartate 8 provides a ligand contact to Mg(2+).

Belongs to the CRISPR-associated endoribonuclease Cas2 protein family. Homodimer, forms a heterotetramer with a Cas1 homodimer. Mg(2+) is required as a cofactor.

Functionally, CRISPR (clustered regularly interspaced short palindromic repeat), is an adaptive immune system that provides protection against mobile genetic elements (viruses, transposable elements and conjugative plasmids). CRISPR clusters contain sequences complementary to antecedent mobile elements and target invading nucleic acids. CRISPR clusters are transcribed and processed into CRISPR RNA (crRNA). Functions as a ssRNA-specific endoribonuclease. Involved in the integration of spacer DNA into the CRISPR cassette. The sequence is that of CRISPR-associated endoribonuclease Cas2 from Methanosarcina acetivorans (strain ATCC 35395 / DSM 2834 / JCM 12185 / C2A).